We begin with the raw amino-acid sequence, 565 residues long: Protein priB (565 aa).

The segment at residues 20 to 50 is a DNA-binding region (zn(2)-C6 fungal-type); that stretch reads CTTCRAAKMKCVGAEDGQRQCQRCKRANVQC. Disordered regions lie at residues 82-170 and 195-224; these read AKSK…SDRA and NPED…APAG. Residues 90-111 show a composition bias toward basic and acidic residues; sequence DARHSSSYRDSHPSLGEPDDRY. Residues 129-155 show a composition bias toward low complexity; the sequence is SNLPPLNLPSYPDAASEYTASSTSSRT. Residues 203-215 show a composition bias toward polar residues; the sequence is GPSSVRCSETYSP.

The protein resides in the nucleus. This is Protein priB (priB) from Lentinula edodes (Shiitake mushroom).